The following is a 379-amino-acid chain: Succinyl-diaminopimelate desuccinylase (379 aa).

Position 70 (His70) interacts with Zn(2+). Asp72 is a catalytic residue. Asp103 contacts Zn(2+). The active-site Proton acceptor is the Glu137. 3 residues coordinate Zn(2+): Glu138, Glu166, and His352.

This sequence belongs to the peptidase M20A family. DapE subfamily. As to quaternary structure, homodimer. It depends on Zn(2+) as a cofactor. The cofactor is Co(2+).

It catalyses the reaction N-succinyl-(2S,6S)-2,6-diaminopimelate + H2O = (2S,6S)-2,6-diaminopimelate + succinate. Its pathway is amino-acid biosynthesis; L-lysine biosynthesis via DAP pathway; LL-2,6-diaminopimelate from (S)-tetrahydrodipicolinate (succinylase route): step 3/3. In terms of biological role, catalyzes the hydrolysis of N-succinyl-L,L-diaminopimelic acid (SDAP), forming succinate and LL-2,6-diaminopimelate (DAP), an intermediate involved in the bacterial biosynthesis of lysine and meso-diaminopimelic acid, an essential component of bacterial cell walls. The sequence is that of Succinyl-diaminopimelate desuccinylase from Burkholderia vietnamiensis (strain G4 / LMG 22486) (Burkholderia cepacia (strain R1808)).